A 435-amino-acid chain; its full sequence is Serine--tRNA ligase (435 aa).

242–244 (TAE) is a binding site for L-serine. 273–275 (RSE) serves as a coordination point for ATP. Glu296 contributes to the L-serine binding site. Position 360 to 363 (360 to 363 (EISS)) interacts with ATP. An L-serine-binding site is contributed by Ser396.

Belongs to the class-II aminoacyl-tRNA synthetase family. Type-1 seryl-tRNA synthetase subfamily. As to quaternary structure, homodimer. The tRNA molecule binds across the dimer.

It localises to the cytoplasm. The enzyme catalyses tRNA(Ser) + L-serine + ATP = L-seryl-tRNA(Ser) + AMP + diphosphate + H(+). The catalysed reaction is tRNA(Sec) + L-serine + ATP = L-seryl-tRNA(Sec) + AMP + diphosphate + H(+). Its pathway is aminoacyl-tRNA biosynthesis; selenocysteinyl-tRNA(Sec) biosynthesis; L-seryl-tRNA(Sec) from L-serine and tRNA(Sec): step 1/1. Catalyzes the attachment of serine to tRNA(Ser). Is also able to aminoacylate tRNA(Sec) with serine, to form the misacylated tRNA L-seryl-tRNA(Sec), which will be further converted into selenocysteinyl-tRNA(Sec). This chain is Serine--tRNA ligase, found in Vibrio parahaemolyticus serotype O3:K6 (strain RIMD 2210633).